A 49-amino-acid chain; its full sequence is Large ribosomal subunit protein bL33B (49 aa).

Belongs to the bacterial ribosomal protein bL33 family.

In Lacticaseibacillus paracasei (strain ATCC 334 / BCRC 17002 / CCUG 31169 / CIP 107868 / KCTC 3260 / NRRL B-441) (Lactobacillus paracasei), this protein is Large ribosomal subunit protein bL33B.